Here is a 74-residue protein sequence, read N- to C-terminus: Homeobox protein H40 (74 aa).

Residues 8–67 (ARRARTAFTYEQLVALENKFKTTRYLSVCERLNLALSLSLTETQVKIWFQNRRTKWKKQN) constitute a DNA-binding region (homeobox).

It localises to the nucleus. The sequence is that of Homeobox protein H40 from Apis mellifera (Honeybee).